The sequence spans 165 residues: Ubiquitin-conjugating enzyme E2 G2 (165 aa).

A2 carries the N-acetylalanine modification. The region spanning 4–164 (TALKRLMAEY…AKQIVQKSLG (161 aa)) is the UBC core domain. The Glycyl thioester intermediate role is filled by C89.

This sequence belongs to the ubiquitin-conjugating enzyme family. As to quaternary structure, interacts with AUP1 (via C-terminus); the interaction recruits UBE2G2 to lipid droplets. Interacts with ubiquitin ligases AMFR/gp78 and RNF139/TRC8; recruitment to lipid droplets by AUP1 facilitates interaction of UBE2G2 with AMFR and RNF139, leading to sterol-induced ubiquitination of 3-hydroxy-3-methylglutaryl coenzyme A reductase and its subsequent proteasomal degradation.

Its subcellular location is the endoplasmic reticulum. It is found in the lipid droplet. It carries out the reaction S-ubiquitinyl-[E1 ubiquitin-activating enzyme]-L-cysteine + [E2 ubiquitin-conjugating enzyme]-L-cysteine = [E1 ubiquitin-activating enzyme]-L-cysteine + S-ubiquitinyl-[E2 ubiquitin-conjugating enzyme]-L-cysteine.. It functions in the pathway protein modification; protein ubiquitination. Functionally, accepts ubiquitin from the E1 complex and catalyzes its covalent attachment to other proteins. In vitro catalyzes 'Lys-48'-linked polyubiquitination. Involved in endoplasmic reticulum-associated degradation (ERAD). Required for sterol-induced ubiquitination of 3-hydroxy-3-methylglutaryl coenzyme A reductase and its subsequent proteasomal degradation. In Homo sapiens (Human), this protein is Ubiquitin-conjugating enzyme E2 G2.